The primary structure comprises 695 residues: Threonine--tRNA ligase (695 aa).

The TGS domain occupies 6-75 (SAIFVNTTDT…ETTATFTAVP (70 aa)). The catalytic stretch occupies residues 274 to 580 (DHRRLGTELD…LLEHYAGAFP (307 aa)). Zn(2+) is bound by residues Cys-379, His-430, and His-557.

This sequence belongs to the class-II aminoacyl-tRNA synthetase family. In terms of assembly, homodimer. Zn(2+) is required as a cofactor.

The protein resides in the cytoplasm. The catalysed reaction is tRNA(Thr) + L-threonine + ATP = L-threonyl-tRNA(Thr) + AMP + diphosphate + H(+). Catalyzes the attachment of threonine to tRNA(Thr) in a two-step reaction: L-threonine is first activated by ATP to form Thr-AMP and then transferred to the acceptor end of tRNA(Thr). Also edits incorrectly charged L-seryl-tRNA(Thr). In Corynebacterium glutamicum (strain ATCC 13032 / DSM 20300 / JCM 1318 / BCRC 11384 / CCUG 27702 / LMG 3730 / NBRC 12168 / NCIMB 10025 / NRRL B-2784 / 534), this protein is Threonine--tRNA ligase.